Here is a 46-residue protein sequence, read N- to C-terminus: Protein PsbN (46 aa).

The chain crosses the membrane as a helical span at residues 10–30 (VSIAVLTALLGLTGFGIYTAF).

Belongs to the PsbN family.

The protein localises to the cellular thylakoid membrane. In terms of biological role, may play a role in photosystem I and II biogenesis. The sequence is that of Protein PsbN from Synechococcus sp. (strain RCC307).